The following is a 983-amino-acid chain: Ephrin type-A receptor 3 (983 aa).

The N-terminal stretch at 1-20 is a signal peptide; it reads MDCHLSILVLLGCCVLSCSG. The Extracellular segment spans residues 21–540; that stretch reads ELSPQPSNEV…SFSISGENSH (520 aa). Positions 29–206 constitute an Eph LBD domain; the sequence is EVNLLDSKTI…YFKKCPFTVK (178 aa). Asparagine 231, asparagine 336, asparagine 390, asparagine 403, and asparagine 492 each carry an N-linked (GlcNAc...) asparagine glycan. Fibronectin type-III domains are found at residues 324 to 434 and 435 to 530; these read PPSA…TNQA and APSP…TSPD. Residues 541–564 traverse the membrane as a helical segment; that stretch reads VVMIAISAAVAIIVLTVVTYVLVG. Residues 565–983 lie on the Cytoplasmic side of the membrane; sequence RFCGYHKSKH…TQSKNGPVPV (419 aa). Tyrosine 596 and tyrosine 602 each carry phosphotyrosine; by autocatalysis. The Protein kinase domain occupies 621–882; that stretch reads ISIDKVVGAG…QIVSILDKLI (262 aa). ATP is bound by residues 628-633, lysine 653, and 700-706; these read GAGEFG and EYMENGS. Tyrosine 701 carries the phosphotyrosine; by autocatalysis modification. Residue aspartate 746 is the Proton acceptor of the active site. 750 to 751 is a binding site for ATP; it reads RN. A Phosphotyrosine; by autocatalysis modification is found at tyrosine 779. Residues 911-975 form the SAM domain; the sequence is ATFHTTGDWL…ISTIKALETQ (65 aa). Tyrosine 937 carries the phosphotyrosine modification. Positions 981-983 match the PDZ-binding motif; sequence VPV.

It belongs to the protein kinase superfamily. Tyr protein kinase family. Ephrin receptor subfamily. In terms of assembly, heterotetramer upon binding of the ligand. The heterotetramer is composed of an ephrin dimer and a receptor dimer. Oligomerization is probably required to induce biological responses. Forms a ternary EFNA5-EPHA3-ADAM10 complex mediating EFNA5 extracellular domain shedding by ADAM10 which regulates the EFNA5-EPHA3 complex internalization and function. Interacts (phosphorylated) with PTPN1; dephosphorylates EPHA3 and may regulate its trafficking and function. Interacts (phosphorylated) with CRK; mediates EFNA5-EPHA3 signaling through RHOA GTPase activation. Interacts with NCK1 (via SH2 domain); mediates EFNA5-EPHA3 signaling. Autophosphorylates upon activation by EFNA5. Phosphorylation on Tyr-602 mediates interaction with NCK1. Dephosphorylated by PTPN1. In terms of tissue distribution, greatest levels of expression occurring in the brain, also detected in testis. Expressed in myogenic progenitor cells.

It localises to the cell membrane. The protein localises to the secreted. The catalysed reaction is L-tyrosyl-[protein] + ATP = O-phospho-L-tyrosyl-[protein] + ADP + H(+). Functionally, receptor tyrosine kinase which binds promiscuously membrane-bound ephrin family ligands residing on adjacent cells, leading to contact-dependent bidirectional signaling into neighboring cells. The signaling pathway downstream of the receptor is referred to as forward signaling while the signaling pathway downstream of the ephrin ligand is referred to as reverse signaling. Highly promiscuous for ephrin-A ligands it binds preferentially EFNA5. Upon activation by EFNA5 regulates cell-cell adhesion, cytoskeletal organization and cell migration. Plays a role in cardiac cells migration and differentiation and regulates the formation of the atrioventricular canal and septum during development probably through activation by EFNA1. Involved in the retinotectal mapping of neurons. May also control the segregation but not the guidance of motor and sensory axons during neuromuscular circuit development. The sequence is that of Ephrin type-A receptor 3 (Epha3) from Mus musculus (Mouse).